Reading from the N-terminus, the 143-residue chain is Putative 2'-deoxynucleoside 5'-phosphate N-hydrolase 1 (143 aa).

Substrate is bound by residues H37, E82, and 106-108; that span reads SAM.

Belongs to the 2'-deoxynucleoside 5'-phosphate N-hydrolase 1 family. Monomer and homodimer.

It catalyses the reaction a pyrimidine 2'-deoxyribonucleoside 5'-phosphate + H2O = a pyrimidine nucleobase + 2-deoxy-D-ribose 5-phosphate. The enzyme catalyses a purine 2'-deoxyribonucleoside 5'-phosphate + H2O = a purine nucleobase + 2-deoxy-D-ribose 5-phosphate. In terms of biological role, catalyzes the cleavage of the N-glycosidic bond of deoxyribonucleoside 5'-monophosphates to yield deoxyribose 5-phosphate and a purine or pyrimidine base. The protein is Putative 2'-deoxynucleoside 5'-phosphate N-hydrolase 1 of Thermofilum pendens (strain DSM 2475 / Hrk 5).